A 457-amino-acid chain; its full sequence is MHRYKKEASNLIKLATPVLIASVAQTGMGFVDTIMAGGVSAIDMAAVSIAASIWLPSILFGVGLLMALVPVVAQLNGAGRQHKIPFEVHQGLILALLVSVPIIAVLFQTQFIIRFMDVEEAMATKTVGYMHAVIFAVPAYLLFQALRSFTDGMSLTKPAMVIGFIGLLLNIPLNWIFVYGKFGAPELGGVGCGVATAIVYWIMLLLLLFYIVTSKRLAHVKVFETFHKPQPKELIRLFRLGFPVAAALFFEVTLFAVVALLVAPLGSTVVAAHQVALNFSSLVFMFPMSIGAAVSIRVGHKLGEQDTKGAAIAANVGLMTGLATACITALLTVLFREQIALLYTENQVVVALAMQLLLFAAIYQCMDAVQVVAAGSLRGYKDMTAIFHRTFISYWVLGLPTGYILGMTNWLTEQPLGAKGFWLGFIIGLSAAALMLGQRLYWLQKQSDDVQLHLAAK.

Helical transmembrane passes span 30-50, 53-73, 93-113, 126-146, 159-179, 192-212, 242-262, 276-296, 315-335, 348-368, 391-411, and 416-436; these read FVDT…VSIA, IWLP…PVVA, ILAL…QFII, TVGY…FQAL, AMVI…IFVY, CGVA…FYIV, FPVA…ALLV, ALNF…AVSI, NVGL…TVLF, VVVA…CMDA, FISY…TNWL, and LGAK…ALML.

It belongs to the multi antimicrobial extrusion (MATE) (TC 2.A.66.1) family.

Its subcellular location is the cell inner membrane. Functionally, multidrug efflux pump that functions as a Na(+)/drug antiporter. Confers resistance to norfloxacin, ciprofloxacin, ofloxacin, daunomycin, doxorubicin, streptomycin, kanamycin, ethidium bromide and acriflavine. In Vibrio cholerae serotype O1 (strain ATCC 39315 / El Tor Inaba N16961), this protein is Multidrug resistance protein NorM (norM).